Here is a 950-residue protein sequence, read N- to C-terminus: Glycine dehydrogenase (decarboxylating) (950 aa).

Lys-698 is modified (N6-(pyridoxal phosphate)lysine).

It belongs to the GcvP family. As to quaternary structure, the glycine cleavage system is composed of four proteins: P, T, L and H. Requires pyridoxal 5'-phosphate as cofactor.

It carries out the reaction N(6)-[(R)-lipoyl]-L-lysyl-[glycine-cleavage complex H protein] + glycine + H(+) = N(6)-[(R)-S(8)-aminomethyldihydrolipoyl]-L-lysyl-[glycine-cleavage complex H protein] + CO2. The glycine cleavage system catalyzes the degradation of glycine. The P protein binds the alpha-amino group of glycine through its pyridoxal phosphate cofactor; CO(2) is released and the remaining methylamine moiety is then transferred to the lipoamide cofactor of the H protein. In Neisseria meningitidis serogroup C (strain 053442), this protein is Glycine dehydrogenase (decarboxylating).